The primary structure comprises 592 residues: Frizzled-1 (592 aa).

Residues 1 to 26 (MAERRGPAGGGSGEVGGGRRAGGDRC) are disordered. Residues 1 to 48 (MAERRGPAGGGSGEVGGGRRAGGDRCPRRPPALPLLLLLWAAALPAGG) form the signal peptide. The segment covering 7–20 (PAGGGSGEVGGGRR) has biased composition (gly residues). Topologically, residues 49 to 271 (QPAAQPAALS…PEELRFSRTW (223 aa)) are extracellular. The 120-residue stretch at 65-184 (PDHGYCQPIS…HGAGELCVGQ (120 aa)) folds into the FZ domain. Disulfide bonds link cysteine 70-cysteine 131, cysteine 78-cysteine 124, cysteine 115-cysteine 152, cysteine 141-cysteine 181, and cysteine 145-cysteine 169. The N-linked (GlcNAc...) asparagine glycan is linked to asparagine 84. Asparagine 185 is a glycosylation site (N-linked (GlcNAc...) asparagine). The tract at residues 185-219 (NASERGTPTPALRPESWTSNPHRGGGAGGSGPGEA) is disordered. Positions 207–218 (RGGGAGGSGPGE) are enriched in gly residues. A helical membrane pass occupies residues 272–292 (IGIWSVLCCASTLFTVLTYLV). The Cytoplasmic portion of the chain corresponds to 293–303 (DMKRFSYPERP). Residues 304 to 324 (IIFLSGCYTAVAVAYIAGFLL) traverse the membrane as a helical segment. Residues 325–351 (EERVVCNERFAEDGSRTVAQGTKREGC) are Extracellular-facing. A helical membrane pass occupies residues 352–372 (TILFMMLYFFGMASSIWWVIL). At 373–394 (SLTWFLAAGMKWGHEAIEANSQ) the chain is on the cytoplasmic side. A helical transmembrane segment spans residues 395–415 (YFHLAAWAVPAIKTITILALG). Topologically, residues 416–438 (QVDGDVLSGVCFVGINNVDALRG) are extracellular. Residues 439–459 (FVLAPLFVYLFIGTSFLLAGF) form a helical membrane-spanning segment. Topologically, residues 460 to 485 (VSLFRIRTIMKHDGTKTEKLEKLMVR) are cytoplasmic. A helical membrane pass occupies residues 486–506 (IGIFSVLYTVPATIVIACYFY). At 507 to 546 (EQAFREQWERSWVTQSCKSYAIPCPNNHSSHHPPMSPDFT) the chain is on the extracellular side. The N-linked (GlcNAc...) asparagine glycan is linked to asparagine 533. The chain crosses the membrane as a helical span at residues 547–567 (VFMIKYLMTLIVGITSGFWIW). Residues 568–592 (SGKTLNSWRKFYTRLTNSKQGETTV) lie on the Cytoplasmic side of the membrane. The Lys-Thr-X-X-X-Trp motif, mediates interaction with the PDZ domain of Dvl family members motif lies at 570–575 (KTLNSW). The PDZ-binding motif lies at 590–592 (TTV).

It belongs to the G-protein coupled receptor Fz/Smo family. As to expression, expressed in the lens, otic placode (medial wall of the vesicle) and in epibranchial placode. Also expressed in the developing somites (dermomyotome).

Its subcellular location is the cell membrane. Functionally, receptor for Wnt proteins. Functions in the canonical Wnt/beta-catenin signaling pathway. The canonical Wnt/beta-catenin signaling pathway leads to the activation of disheveled proteins, inhibition of GSK-3 kinase, nuclear accumulation of beta-catenin and activation of Wnt target genes. A second signaling pathway involving PKC and calcium fluxes has been seen for some family members, but it is not yet clear if it represents a distinct pathway or if it can be integrated in the canonical pathway, as PKC seems to be required for Wnt-mediated inactivation of GSK-3 kinase. Both pathways seem to involve interactions with G-proteins. May be involved in transduction and intercellular transmission of polarity information during tissue morphogenesis and/or in differentiated tissues. In Gallus gallus (Chicken), this protein is Frizzled-1 (FZD1).